Reading from the N-terminus, the 291-residue chain is ATP synthase gamma chain (291 aa).

The protein belongs to the ATPase gamma chain family. In terms of assembly, F-type ATPases have 2 components, CF(1) - the catalytic core - and CF(0) - the membrane proton channel. CF(1) has five subunits: alpha(3), beta(3), gamma(1), delta(1), epsilon(1). CF(0) has three main subunits: a, b and c.

The protein localises to the cell inner membrane. In terms of biological role, produces ATP from ADP in the presence of a proton gradient across the membrane. The gamma chain is believed to be important in regulating ATPase activity and the flow of protons through the CF(0) complex. This Burkholderia multivorans (strain ATCC 17616 / 249) protein is ATP synthase gamma chain.